Here is a 331-residue protein sequence, read N- to C-terminus: MARMYYDADANLDLLADKTVAIIGYGSQGHAHALNLKDSGINVVVGLYPGSKSRQKAEDAGLKVMNVADAASAADWIMILLPDEVQKAVYQEDIEPNLREGKVLSFAHGFNIHFGQIVPPETVDVIMVAPKGPGHLVRRTYEQGEGVPCLFAVYQDASGQARDRAMAYAKGIGGTRAGILETSFREETETDLFGEQVVLCGGLSALIKSGFETLVAAGYQPELAYFECLHEVKLIVDLIVEGGLAKMRDSISNTAEYGDLTRGPRIVTDETRAEMKQILREIQSGQFAREFVLENQSGKPGFTAMRRQEAEHPIEEVGKDLRAMFSWLKDK.

One can recognise a KARI N-terminal Rossmann domain in the interval 2 to 182; it reads ARMYYDADAN…GGTRAGILET (181 aa). Residues 25-28, Ser51, Ser53, and 83-86 contribute to the NADP(+) site; these read YGSQ and DEVQ. The active site involves His108. Residue Gly134 participates in NADP(+) binding. The region spanning 183–328 is the KARI C-terminal knotted domain; it reads SFREETETDL…KDLRAMFSWL (146 aa). Residues Asp191, Glu195, Glu227, and Glu231 each contribute to the Mg(2+) site. Residue Ser252 participates in substrate binding.

It belongs to the ketol-acid reductoisomerase family. Mg(2+) serves as cofactor.

The catalysed reaction is (2R)-2,3-dihydroxy-3-methylbutanoate + NADP(+) = (2S)-2-acetolactate + NADPH + H(+). It catalyses the reaction (2R,3R)-2,3-dihydroxy-3-methylpentanoate + NADP(+) = (S)-2-ethyl-2-hydroxy-3-oxobutanoate + NADPH + H(+). The protein operates within amino-acid biosynthesis; L-isoleucine biosynthesis; L-isoleucine from 2-oxobutanoate: step 2/4. It participates in amino-acid biosynthesis; L-valine biosynthesis; L-valine from pyruvate: step 2/4. Its function is as follows. Involved in the biosynthesis of branched-chain amino acids (BCAA). Catalyzes an alkyl-migration followed by a ketol-acid reduction of (S)-2-acetolactate (S2AL) to yield (R)-2,3-dihydroxy-isovalerate. In the isomerase reaction, S2AL is rearranged via a Mg-dependent methyl migration to produce 3-hydroxy-3-methyl-2-ketobutyrate (HMKB). In the reductase reaction, this 2-ketoacid undergoes a metal-dependent reduction by NADPH to yield (R)-2,3-dihydroxy-isovalerate. In Crocosphaera subtropica (strain ATCC 51142 / BH68) (Cyanothece sp. (strain ATCC 51142)), this protein is Ketol-acid reductoisomerase (NADP(+)).